The sequence spans 415 residues: Plant UBX domain-containing protein 16 (415 aa).

In terms of domain architecture, UBA spans 19 to 69; that stretch reads QLDEEIVLFRQDQLISSFLEIAVDQTAETARILLQTTDWNIDQAVNLFLTN. The UBX domain maps to 333–413; the sequence is DRSVVCSLCV…GLANSLISVT (81 aa).

The chain is Plant UBX domain-containing protein 16 from Arabidopsis thaliana (Mouse-ear cress).